We begin with the raw amino-acid sequence, 472 residues long: Uronate isomerase (472 aa).

The protein belongs to the metallo-dependent hydrolases superfamily. Uronate isomerase family.

The catalysed reaction is D-glucuronate = D-fructuronate. The enzyme catalyses aldehydo-D-galacturonate = keto-D-tagaturonate. It participates in carbohydrate metabolism; pentose and glucuronate interconversion. This is Uronate isomerase from Halalkalibacterium halodurans (strain ATCC BAA-125 / DSM 18197 / FERM 7344 / JCM 9153 / C-125) (Bacillus halodurans).